The primary structure comprises 205 residues: Large ribosomal subunit protein bL25 (205 aa).

This sequence belongs to the bacterial ribosomal protein bL25 family. CTC subfamily. In terms of assembly, part of the 50S ribosomal subunit; part of the 5S rRNA/L5/L18/L25 subcomplex. Contacts the 5S rRNA. Binds to the 5S rRNA independently of L5 and L18.

Its function is as follows. This is one of the proteins that binds to the 5S RNA in the ribosome where it forms part of the central protuberance. In Bartonella bacilliformis (strain ATCC 35685 / KC583 / Herrer 020/F12,63), this protein is Large ribosomal subunit protein bL25.